Here is a 267-residue protein sequence, read N- to C-terminus: Eukaryotic translation initiation factor 3 subunit K (267 aa).

A PCI domain is found at 46–233 (FDCYANLALL…EARSEVKSER (188 aa)).

This sequence belongs to the eIF-3 subunit K family. As to quaternary structure, component of the eukaryotic translation initiation factor 3 (eIF-3) complex.

The protein resides in the cytoplasm. Functionally, component of the eukaryotic translation initiation factor 3 (eIF-3) complex, which is involved in protein synthesis of a specialized repertoire of mRNAs and, together with other initiation factors, stimulates binding of mRNA and methionyl-tRNAi to the 40S ribosome. The eIF-3 complex specifically targets and initiates translation of a subset of mRNAs involved in cell proliferation. The sequence is that of Eukaryotic translation initiation factor 3 subunit K from Aspergillus niger (strain ATCC MYA-4892 / CBS 513.88 / FGSC A1513).